Reading from the N-terminus, the 486-residue chain is Zinc finger CCCH domain-containing protein 49 (486 aa).

The C3H1-type zinc finger occupies 157 to 184 (RNRAHVCSFYVRGECTRGAECPYRHEMP). Positions 228-301 (RTLYIGGLDS…VRLKLMWGKP (74 aa)) constitute an RRM domain. 2 disordered regions span residues 329-348 (SQQQSGDQPQPPGMEGQQQP) and 379-486 (LVES…NGMT). Low complexity-rich tracts occupy residues 389 to 407 (PGPQQAGQGQASSSSGQSY) and 415 to 430 (YHGGQYPPYYPPYGGY). Positions 431-444 (MPPPRMPYQQPPQY) are enriched in pro residues. Over residues 445–486 (PAYQPMLAPPAQSQASSLQQPAPATQQLGQGPQQQTTQNGMT) the composition is skewed to low complexity.

The protein is Zinc finger CCCH domain-containing protein 49 of Oryza sativa subsp. japonica (Rice).